Here is a 93-residue protein sequence, read N- to C-terminus: Cell division protein FtsB (93 aa).

Over 1-3 the chain is Cytoplasmic; it reads MRL. Residues 4 to 21 form a helical membrane-spanning segment; it reads FILVLTLLFGWLQYTLWF. The Periplasmic portion of the chain corresponds to 22–93; sequence GKNGVSDYYT…FYRIVGEENQ (72 aa). A coiled-coil region spans residues 42–75; the sequence is VNTKLQARNSEMYAEIDDLKQGLDAIEERARHEL.

It belongs to the FtsB family. Part of a complex composed of FtsB, FtsL and FtsQ.

It localises to the cell inner membrane. Essential cell division protein. May link together the upstream cell division proteins, which are predominantly cytoplasmic, with the downstream cell division proteins, which are predominantly periplasmic. This Vibrio vulnificus (strain YJ016) protein is Cell division protein FtsB.